Reading from the N-terminus, the 265-residue chain is Phosphatidylglycerol--prolipoprotein diacylglyceryl transferase (265 aa).

4 helical membrane-spanning segments follow: residues 17-37 (LSIR…WLLG), 56-76 (LVTY…MLFY), 92-112 (WQGG…VWFF), and 117-137 (GKGF…GLFA). Arg139 is a binding site for a 1,2-diacyl-sn-glycero-3-phospho-(1'-sn-glycerol). 3 consecutive transmembrane segments (helical) span residues 173 to 193 (PSQL…VWLY), 201 to 221 (GAVS…VELV), and 235 to 255 (WLTM…WLLA).

It belongs to the Lgt family.

Its subcellular location is the cell inner membrane. The enzyme catalyses L-cysteinyl-[prolipoprotein] + a 1,2-diacyl-sn-glycero-3-phospho-(1'-sn-glycerol) = an S-1,2-diacyl-sn-glyceryl-L-cysteinyl-[prolipoprotein] + sn-glycerol 1-phosphate + H(+). The protein operates within protein modification; lipoprotein biosynthesis (diacylglyceryl transfer). Functionally, catalyzes the transfer of the diacylglyceryl group from phosphatidylglycerol to the sulfhydryl group of the N-terminal cysteine of a prolipoprotein, the first step in the formation of mature lipoproteins. The protein is Phosphatidylglycerol--prolipoprotein diacylglyceryl transferase of Solidesulfovibrio magneticus (strain ATCC 700980 / DSM 13731 / RS-1) (Desulfovibrio magneticus).